The following is a 462-amino-acid chain: Argininosuccinate lyase (462 aa).

Belongs to the lyase 1 family. Argininosuccinate lyase subfamily.

Its subcellular location is the cytoplasm. The enzyme catalyses 2-(N(omega)-L-arginino)succinate = fumarate + L-arginine. Its pathway is amino-acid biosynthesis; L-arginine biosynthesis; L-arginine from L-ornithine and carbamoyl phosphate: step 3/3. In Thermus thermophilus (strain ATCC BAA-163 / DSM 7039 / HB27), this protein is Argininosuccinate lyase.